The primary structure comprises 112 residues: S-adenosylmethionine decarboxylase proenzyme (112 aa).

Ser-62 serves as the catalytic Schiff-base intermediate with substrate; via pyruvic acid. At Ser-62 the chain carries Pyruvic acid (Ser); by autocatalysis. The active-site Proton acceptor; for processing activity is the His-67. Cys-82 (proton donor; for catalytic activity) is an active-site residue.

The protein belongs to the prokaryotic AdoMetDC family. Type 1 subfamily. Heterotetramer of two alpha and two beta chains arranged as a dimer of alpha/beta heterodimers. Requires pyruvate as cofactor. In terms of processing, is synthesized initially as an inactive proenzyme. Formation of the active enzyme involves a self-maturation process in which the active site pyruvoyl group is generated from an internal serine residue via an autocatalytic post-translational modification. Two non-identical subunits are generated from the proenzyme in this reaction, and the pyruvate is formed at the N-terminus of the alpha chain, which is derived from the carboxyl end of the proenzyme. The post-translation cleavage follows an unusual pathway, termed non-hydrolytic serinolysis, in which the side chain hydroxyl group of the serine supplies its oxygen atom to form the C-terminus of the beta chain, while the remainder of the serine residue undergoes an oxidative deamination to produce ammonia and the pyruvoyl group blocking the N-terminus of the alpha chain.

The catalysed reaction is S-adenosyl-L-methionine + H(+) = S-adenosyl 3-(methylsulfanyl)propylamine + CO2. Its pathway is amine and polyamine biosynthesis; S-adenosylmethioninamine biosynthesis; S-adenosylmethioninamine from S-adenosyl-L-methionine: step 1/1. In terms of biological role, catalyzes the decarboxylation of S-adenosylmethionine to S-adenosylmethioninamine (dcAdoMet), the propylamine donor required for the synthesis of the polyamines spermine and spermidine from the diamine putrescine. This chain is S-adenosylmethionine decarboxylase proenzyme, found in Archaeoglobus fulgidus (strain ATCC 49558 / DSM 4304 / JCM 9628 / NBRC 100126 / VC-16).